Consider the following 96-residue polypeptide: Protein transport protein Sec61 subunit beta (96 aa).

The span at 1–17 (MPGPTPSGTNVGSSGRS) shows a compositional bias: polar residues. Positions 1–54 (MPGPTPSGTNVGSSGRSPSKAVAARAAGSTVRQRKNASCGTRSAGRTTSAGTGG) are disordered. Pro-2 is modified (N-acetylproline). Topologically, residues 2–70 (PGPTPSGTNV…EDSPGLKVGP (69 aa)) are cytoplasmic. The residue at position 7 (Ser-7) is a Phosphoserine. Residue Thr-9 is modified to Phosphothreonine. Phosphoserine is present on residues Ser-13, Ser-14, and Ser-17. Cys-39 carries the S-palmitoyl cysteine lipid modification. Low complexity predominate over residues 40–50 (GTRSAGRTTSA). A helical transmembrane segment spans residues 71–91 (VPVLVMSLLFIAAVFMLHIWG).

It belongs to the SEC61-beta family. In terms of assembly, the SEC61 channel-forming translocon complex consists of channel-forming core components SEC61A1, SEC61B and SEC61G and different auxiliary components such as SEC62 and SEC63. The SEC61 channel associates with the multi-pass translocon (MPT) complex. Interacts with TRAM1.

It localises to the endoplasmic reticulum membrane. In terms of biological role, component of SEC61 channel-forming translocon complex that mediates transport of signal peptide-containing precursor polypeptides across the endoplasmic reticulum (ER). Forms a ribosome receptor and a gated pore in the ER membrane, both functions required for cotranslational translocation of nascent polypeptides. The SEC61 channel is also involved in ER membrane insertion of transmembrane proteins: it mediates membrane insertion of the first few transmembrane segments of proteins, while insertion of subsequent transmembrane regions of multi-pass membrane proteins is mediated by the multi-pass translocon (MPT) complex. The SEC61 channel cooperates with the translocating protein TRAM1 to import nascent proteins into the ER. Required for PKD1/Polycystin-1 biogenesis. The polypeptide is Protein transport protein Sec61 subunit beta (Mus musculus (Mouse)).